We begin with the raw amino-acid sequence, 230 residues long: uncharacterized protein (230 aa).

Disordered stretches follow at residues 63-90 (TDCQ…KKTI) and 194-230 (KKLE…YKEH). Basic and acidic residues predominate over residues 194–217 (KKLEEREQMDKHPQDRDNKDKEVN).

This is an uncharacterized protein from Caenorhabditis elegans.